Consider the following 391-residue polypeptide: Nutrient and stress factor 1 (391 aa).

Residues 1–27 (MENTTNRNTAGVLTSSNGNFATNSVAA) are compositionally biased toward polar residues. A disordered region spans residues 1–37 (MENTTNRNTAGVLTSSNGNFATNSVAASTPKRSKSAR). 2 consecutive C2H2-type zinc fingers follow at residues 41-66 (FKCTGYDGCTMSFTRAEHLARHIRKH) and 72-95 (FQCPACLKFFSRVDNLKQHRESVH). A disordered region spans residues 91–149 (RESVHAHKNHHSTSSHQRKPSSSSLSSSSSASSSSSASSSTSYSDPYRKTNINSGNMPM). Positions 96 to 109 (AHKNHHSTSSHQRK) are enriched in basic residues. The segment covering 110 to 134 (PSSSSLSSSSSASSSSSASSSTSYS) has biased composition (low complexity). 2 positions are modified to phosphoserine: Ser-162 and Ser-163. A disordered region spans residues 326-374 (AFSQPPNGNKNNNMSSSKNGGKGGENFKNTDDRNDNNNKKRSETLSESD). Residues 332-344 (NGNKNNNMSSSKN) are compositionally biased toward low complexity. A compositionally biased stretch (basic and acidic residues) spans 353–369 (KNTDDRNDNNNKKRSET).

The protein resides in the nucleus. In terms of biological role, transcription factor that participates in the transcriptional activation of glucose-repressed genes during exponential growth in non-fermentable carbon conditions. Also involved in salt-stress response. This chain is Nutrient and stress factor 1 (USV1), found in Saccharomyces cerevisiae (strain ATCC 204508 / S288c) (Baker's yeast).